We begin with the raw amino-acid sequence, 589 residues long: Mitoguardin 2 (589 aa).

2 helical membrane-spanning segments follow: residues 11–31 (IIQA…TTFG) and 42–62 (PGLR…ALAA). A disordered region spans residues 87-134 (VPGSVLPVRRSSSAKKGYSRSRVQSPSSKSNDTLSGISSLDPSKHSSS). Composition is skewed to low complexity over residues 106 to 116 (RSRVQSPSSKS) and 123 to 134 (ISSLDPSKHSSS).

The protein belongs to the mitoguardin family. In terms of assembly, homodimer and heterodimer; forms heterodimers with miga1.

The protein localises to the mitochondrion outer membrane. Regulator of mitochondrial fusion: acts by forming homo- and heterodimers at the mitochondrial outer membrane and facilitating the formation of pld6/MitoPLD dimers. May act by regulating phospholipid metabolism via pld6/MitoPLD. This is Mitoguardin 2 from Xenopus laevis (African clawed frog).